Consider the following 214-residue polypeptide: Probable nicotinate-nucleotide adenylyltransferase (214 aa).

It belongs to the NadD family.

The catalysed reaction is nicotinate beta-D-ribonucleotide + ATP + H(+) = deamido-NAD(+) + diphosphate. It participates in cofactor biosynthesis; NAD(+) biosynthesis; deamido-NAD(+) from nicotinate D-ribonucleotide: step 1/1. In terms of biological role, catalyzes the reversible adenylation of nicotinate mononucleotide (NaMN) to nicotinic acid adenine dinucleotide (NaAD). This chain is Probable nicotinate-nucleotide adenylyltransferase, found in Rubrobacter xylanophilus (strain DSM 9941 / JCM 11954 / NBRC 16129 / PRD-1).